The primary structure comprises 782 residues: Sulfate permease family protein 3 (782 aa).

The next 12 membrane-spanning stretches (helical) occupy residues 30-52, 64-84, 86-106, 113-133, 196-216, 232-252, 274-294, 302-322, 359-379, 398-418, 433-453, and 497-517; these read YACS…TWLP, LSGG…LASI, GVPP…YIFF, ALGG…KVML, IHVA…MGVF, GFVV…MLGI, LDNV…FLVF, WLNS…VVGI, HIGL…ITVA, ALGF…TSGF, LTCL…GPAL, and FFLT…GFAV. Residues 546–700 form the STAS domain; it reads KRDLERIQGN…NKVGDAVKAA (155 aa). Acidic residues predominate over residues 728–742; that stretch reads IDEESSDSNDNDDAE. Residues 728 to 782 are disordered; it reads IDEESSDSNDNDDAEIQERITEESENSEEVMSETSVSIEDATSLTSSRNSINSEE. Residues 767–782 show a composition bias toward polar residues; sequence DATSLTSSRNSINSEE.

This sequence belongs to the SLC26A/SulP transporter (TC 2.A.53) family.

The protein resides in the membrane. Its function is as follows. Possible sulfate transporter. The protein is Sulfate permease family protein 3 (sulp-3) of Caenorhabditis elegans.